We begin with the raw amino-acid sequence, 580 residues long: Probable alpha-1,3-mannosyltransferase MNT4 (580 aa).

At 1–10 (MVLRIRRIKK) the chain is on the cytoplasmic side. The chain crosses the membrane as a helical; Signal-anchor for type II membrane protein span at residues 11–29 (LAPLIFTSLLSLIVLFRVY). At 30-580 (RQYPFSDHFE…KVVELWNKVV (551 aa)) the chain is on the lumenal side. N-linked (GlcNAc...) asparagine glycosylation is found at Asn-132, Asn-167, Asn-223, and Asn-349.

Belongs to the MNN1/MNT family.

It is found in the membrane. This Saccharomyces cerevisiae (strain ATCC 204508 / S288c) (Baker's yeast) protein is Probable alpha-1,3-mannosyltransferase MNT4 (MNT4).